The sequence spans 470 residues: MENFWSLCLGRFEEELSAQQFNTWIKPLRFEAREGTLRLLAPNRFVQQWVKDRFLQKISALAEEVLSTPVQIELALYDASEKSPITLAKPKPAEAPGAAAKIEAEISKVTKTVSPAKPASAAPKKPKTLTETSGLNPAFRFDNFVTGKANQLARAAAIQVAENPGTAYNPLFIYGGVGLGKTHVLQAIGNHLKSQRPDAKIRYLHAERYVSDVVKAYEHKAFDEFKRQYHSLDLLLIDDIQFFAKKSRTQEEFFYAFNSLIEAKKQIIITCDTYPKEIADVDERLRTRFSWGLTVAVEPPELEMRVAILLKKAEAARVTLDEDVAFFIAKQVRSSVRELEGALNRIIAMANFTGHAIDVSLAKEALKDLIAVRGRQITIENIQKTVADYYKIKVAEMYSKKRSRNFARPRQIAMTLARELTNHSFPEIGEAFGGRHHTTVMHACDEIEQLRQNDQNVARDIAVLIQVIRD.

Positions 1–68 (MENFWSLCLG…SALAEEVLST (68 aa)) are domain I, interacts with DnaA modulators. Residues 68–133 (TPVQIELALY…KKPKTLTETS (66 aa)) form a domain II region. Residues 134 to 350 (GLNPAFRFDN…GALNRIIAMA (217 aa)) are domain III, AAA+ region. 4 residues coordinate ATP: Gly-178, Gly-180, Lys-181, and Thr-182. A domain IV, binds dsDNA region spans residues 351–470 (NFTGHAIDVS…IAVLIQVIRD (120 aa)).

Belongs to the DnaA family. Oligomerizes as a right-handed, spiral filament on DNA at oriC.

Its subcellular location is the cytoplasm. Its function is as follows. Plays an essential role in the initiation and regulation of chromosomal replication. ATP-DnaA binds to the origin of replication (oriC) to initiate formation of the DNA replication initiation complex once per cell cycle. Binds the DnaA box (a 9 base pair repeat at the origin) and separates the double-stranded (ds)DNA. Forms a right-handed helical filament on oriC DNA; dsDNA binds to the exterior of the filament while single-stranded (ss)DNA is stabiized in the filament's interior. The ATP-DnaA-oriC complex binds and stabilizes one strand of the AT-rich DNA unwinding element (DUE), permitting loading of DNA polymerase. After initiation quickly degrades to an ADP-DnaA complex that is not apt for DNA replication. Binds acidic phospholipids. This chain is Chromosomal replication initiator protein DnaA, found in Methylobacillus flagellatus (strain ATCC 51484 / DSM 6875 / VKM B-1610 / KT).